The chain runs to 138 residues: Large-conductance mechanosensitive channel (138 aa).

3 helical membrane passes run 19–39 (VGVIIGGAFGAIVTSLVGDII), 40–60 (MPIIGAITGGLDFSNYFIPLA), and 81–101 (GSFLTLTLNFFIVAFVLFMVI).

This sequence belongs to the MscL family. In terms of assembly, homopentamer.

Its subcellular location is the cell inner membrane. In terms of biological role, channel that opens in response to stretch forces in the membrane lipid bilayer. May participate in the regulation of osmotic pressure changes within the cell. The chain is Large-conductance mechanosensitive channel from Bradyrhizobium sp. (strain ORS 278).